The chain runs to 103 residues: Large ribosomal subunit protein bL21 (103 aa).

The protein belongs to the bacterial ribosomal protein bL21 family. Part of the 50S ribosomal subunit. Contacts protein L20.

In terms of biological role, this protein binds to 23S rRNA in the presence of protein L20. The protein is Large ribosomal subunit protein bL21 of Erwinia tasmaniensis (strain DSM 17950 / CFBP 7177 / CIP 109463 / NCPPB 4357 / Et1/99).